The sequence spans 251 residues: Mediator of RNA polymerase II transcription subunit 7 (251 aa).

The disordered stretch occupies residues 1 to 38; it reads MLPGFGAQTVSPFPNPPEYASAYTSDRINNGSAPPPPH. The span at 22–32 shows a compositional bias: polar residues; that stretch reads AYTSDRINNGS.

Belongs to the Mediator complex subunit 7 family. In terms of assembly, component of the Mediator complex. Interacts with mdt-10 and mdt-21. Interacts with RNA polymerase II.

The protein localises to the nucleus. Its function is as follows. Component of the Mediator complex, a coactivator involved in the regulated transcription of nearly all RNA polymerase II-dependent genes. Mediator functions as a bridge to convey information from gene-specific regulatory proteins to the basal RNA polymerase II transcription machinery. Mediator is recruited to promoters by direct interactions with regulatory proteins and serves as a scaffold for the assembly of a functional preinitiation complex with RNA polymerase II and the general transcription factors. Required for germ cell development and gonadal growth. This is Mediator of RNA polymerase II transcription subunit 7 (let-49) from Caenorhabditis elegans.